Reading from the N-terminus, the 214-residue chain is Neurogenin-3 (214 aa).

Residues 1–14 (MTPQPSGAPTVQVT) show a composition bias toward polar residues. The disordered stretch occupies residues 1–98 (MTPQPSGAPT…NDRERNRMHN (98 aa)). Basic and acidic residues predominate over residues 15 to 26 (RETERSFPRASE). 2 stretches are compositionally biased toward basic residues: residues 57–70 (APRK…GRSR) and 79–88 (KQRRSRRKKA). The region spanning 83–135 (SRRKKANDRERNRMHNLNSALDALRGVLPTFPDDAKLTKIETLRFAHNYIWAL) is the bHLH domain.

Efficient DNA binding requires dimerization with another bHLH protein. Interacts with ATOH8.

It is found in the nucleus. Acts as a transcriptional regulator. Together with NKX2-2, initiates transcriptional activation of NEUROD1. Involved in neurogenesis. Also required for the specification of a common precursor of the 4 pancreatic endocrine cell types. The polypeptide is Neurogenin-3 (NEUROG3) (Homo sapiens (Human)).